We begin with the raw amino-acid sequence, 179 residues long: Large ribosomal subunit protein uL6 (179 aa).

Belongs to the universal ribosomal protein uL6 family. As to quaternary structure, part of the 50S ribosomal subunit.

This protein binds to the 23S rRNA, and is important in its secondary structure. It is located near the subunit interface in the base of the L7/L12 stalk, and near the tRNA binding site of the peptidyltransferase center. The chain is Large ribosomal subunit protein uL6 from Bacillus anthracis.